We begin with the raw amino-acid sequence, 141 residues long: MMNTKKLIKMAKKWQQRAALHRKRISFQRSSSATSSTAAEKGCFVVYTTDSTRFAFPLSYLSNSVFQELLKISEEEFGLPTGGPITSPFDSVFLEYLIKLVQRRMDADTEKALLMSISSARCSSQCSLKLQERSTQQLLVF.

It belongs to the ARG7 family.

The protein resides in the cell membrane. Functionally, may promote auxin-stimulated organ elongation, such as hypocotyls, stamen filaments and petals. The chain is Auxin-responsive protein SAUR64 from Arabidopsis thaliana (Mouse-ear cress).